The primary structure comprises 599 residues: Nucleoporin p58/p45 (599 aa).

5 consecutive repeat copies span residues 7–8, 30–31, 44–45, 63–64, and 68–69. The 14 X 2 AA repeats of F-G stretch occupies residues 7-579; sequence FGSGTLGSTT…VSNPASAGFG (573 aa). Residues 213 to 247 form a disordered region; that stretch reads NEGLGGIDFSSSSDKKSDKTGTRPEDSKALKDENL. Over residues 225-246 the composition is skewed to basic and acidic residues; the sequence is SDKKSDKTGTRPEDSKALKDEN. Coiled coils occupy residues 256–276 and 314–381; these read ENLQ…SRMS and ETAQ…SHIT. At Thr-331 the chain carries Phosphothreonine. A run of 9 repeats spans residues 488–489, 492–493, 513–514, 519–520, 529–530, 531–532, 545–546, 568–569, and 578–579. The disordered stretch occupies residues 579–599; sequence GTGGQLLQLKKPPAGNKRGKR.

The protein belongs to the NUP58 family. Component of the p62 complex, a complex at least composed of NUP62, NUP54, and NUP58. Interacts with NUTF2. Interacts with SRP1-alpha and Importin p97 proteins when they are together, but not with SRP1-alpha protein alone. Post-translationally, O-glycosylated.

The protein localises to the nucleus. It localises to the nuclear pore complex. The protein resides in the nucleus membrane. Its function is as follows. Component of the nuclear pore complex, a complex required for the trafficking across the nuclear membrane. In Homo sapiens (Human), this protein is Nucleoporin p58/p45.